A 794-amino-acid chain; its full sequence is Zinc finger protein 148 (794 aa).

A Glycyl lysine isopeptide (Lys-Gly) (interchain with G-Cter in SUMO2) cross-link involves residue K6. Position 51 is a phosphoserine (S51). Residues K88, K115, and K132 each participate in a glycyl lysine isopeptide (Lys-Gly) (interchain with G-Cter in SUMO2) cross-link. The C2H2-type 1 zinc-finger motif lies at 171-193; it reads HVCEHCNAAFRTNYHLQRHVFIH. T194 bears the Phosphothreonine mark. 2 C2H2-type zinc fingers span residues 199–221 and 227–249; these read FQCSQCDMRFIQKYLLQRHEKIH and FRCDECGMRFIQKYHMERHKRTH. At S250 the chain carries Phosphoserine. The C2H2-type 4 zinc-finger motif lies at 255-278; the sequence is YQCEYCLQYFSRTDRVLKHKRMCH. K291 participates in a covalent cross-link: Glycyl lysine isopeptide (Lys-Gly) (interchain with G-Cter in SUMO2). A disordered region spans residues 298–346; it reads EEDSGFSTSPKDNSLPKKKRQKPEKKSSGMDKESVLDKSDTKKDRNDYL. 2 positions are modified to phosphoserine: S301 and S306. A Glycyl lysine isopeptide (Lys-Gly) (interchain with G-Cter in SUMO2) cross-link involves residue K308. A compositionally biased stretch (basic and acidic residues) spans 321-344; it reads EKKSSGMDKESVLDKSDTKKDRND. A Glycyl lysine isopeptide (Lys-Gly) (interchain with G-Cter in SUMO1); alternate cross-link involves residue K356. K356 is covalently cross-linked (Glycyl lysine isopeptide (Lys-Gly) (interchain with G-Cter in SUMO2); alternate). K402 is covalently cross-linked (Glycyl lysine isopeptide (Lys-Gly) (interchain with G-Cter in SUMO2)). S412 is subject to Phosphoserine. Glycyl lysine isopeptide (Lys-Gly) (interchain with G-Cter in SUMO2) cross-links involve residues K421 and K424. Residues 574–588 are compositionally biased toward polar residues; it reads NSSDVPEVTQSENVG. Residues 574–596 are disordered; it reads NSSDVPEVTQSENVGSSSQASSS. N6-acetyllysine is present on K607. 2 positions are modified to phosphoserine: S665 and S784.

It belongs to the krueppel C2H2-type zinc-finger protein family. As to quaternary structure, interacts with HNRNPDL. Interacts with the 5FMC complex; the interaction requires association with CHTOP. Interacts with CAVIN1. Post-translationally, sumoylated with SUMO2. Desumoylated by SENP3, resulting in the stimulation of transcription of its target genes. In terms of tissue distribution, expressed in heart, lung, kidney, skeletal muscle, liver, brain and spleen.

Its subcellular location is the nucleus. In terms of biological role, involved in transcriptional regulation. Represses the transcription of a number of genes including gastrin, stromelysin and enolase. Binds to the G-rich box in the enhancer region of these genes. This chain is Zinc finger protein 148 (Znf148), found in Rattus norvegicus (Rat).